The primary structure comprises 483 residues: MMTNATGERNLALIQEVLEVFPETARKERRKHMMVSDPKMKSVGKCIISNRKSQPGVMTVRGCAYAGSKGVVFGPIKDMAHISHGPAGCGQYSRAERRNYYTGVSGVDSFGTLNFTSDFQERDIVFGGDKKLSKLIEEMELLFPLTKGITIQSECPVGLIGDDISAVANASSKALDKPVIPVRCEGFRGVSQSLGHHIANDVVRDWILNNREGQPFETTPYDVAIIGDYNIGGDAWASRILLEEMGLRVVAQWSGDGTLVEMENTPFVKLNLVHCYRSMNYIARHMEEKHQIPWMEYNFFGPTKIAESLRKIADQFDDTIRANAEAVIARYEGQMAAIIAKYRPRLEGRKVLLYMGGLRPRHVIGAYEDLGMEIIAAGYEFAHNDDYDRTLPDLKEGTLLFDDASSYELEAFVKALKPDLIGSGIKEKYIFQKMGVPFRQMHSWDYSGPYHGYDGFAIFARDMDMTLNNPAWNELTAPWLKSA.

[8Fe-7S] cluster is bound by residues Cys63, Cys89, and Cys155. Residues Cys275 and His442 each coordinate [7Fe-Mo-9S-C-homocitryl] cluster.

Belongs to the NifD/NifK/NifE/NifN family. Tetramer of two alpha and two beta chains. Forms complex with the iron protein (nitrogenase component 2). The cofactor is [8Fe-7S] cluster. [7Fe-Mo-9S-C-homocitryl] cluster serves as cofactor.

It carries out the reaction N2 + 8 reduced [2Fe-2S]-[ferredoxin] + 16 ATP + 16 H2O = H2 + 8 oxidized [2Fe-2S]-[ferredoxin] + 2 NH4(+) + 16 ADP + 16 phosphate + 6 H(+). In terms of biological role, this molybdenum-iron protein is part of the nitrogenase complex that catalyzes the key enzymatic reactions in nitrogen fixation. In Klebsiella pneumoniae, this protein is Nitrogenase molybdenum-iron protein alpha chain (nifD).